A 948-amino-acid polypeptide reads, in one-letter code: Coiled-coil domain-containing protein 66 (948 aa).

2 positions are modified to phosphothreonine: Thr115 and Thr121. Ser369 carries the post-translational modification Phosphoserine. The tract at residues 458–499 (DRRRQKQLEHQKAITAQVEEKRRKKQLEEEQRKKEEQEEELR) is disordered. The stretch at 467-558 (HQKAITAQVE…EQRIRELAQK (92 aa)) forms a coiled coil. The segment at 570–948 (GVDTIQMEYN…NQEESFGSSF (379 aa)) is mediates localization to cilia, centrosomes and spindle microtubules and the interaction with PCM1, CEP290, CEP104 and CSPP1. Ser606 bears the Phosphoserine mark. 2 disordered regions span residues 690–713 (QTKH…KRYI) and 788–808 (SFSK…RTQQ).

In terms of assembly, homodimer; disulfide-linked. Interacts with CEP290. Interacts with PCM1. Interacts with ARMC9, TOGARAM1, CSPP1 and CEP104. Interacts with CDK5RAP2, CEP152, CEP192, TBG1 and PRC1. In terms of tissue distribution, widely expressed (at protein level). Expressed in retina, mainly in photoreceptors but also in outer plexiform and ganglion cell layers (at protein level).

It is found in the cytoplasm. It localises to the cytoskeleton. The protein localises to the microtubule organizing center. The protein resides in the centrosome. Its subcellular location is the centriolar satellite. It is found in the cell projection. It localises to the cilium. The protein localises to the cilium basal body. The protein resides in the cilium axoneme. Its subcellular location is the photoreceptor inner segment. It is found in the photoreceptor outer segment. It localises to the spindle. The protein localises to the midbody. Microtubule-binding protein required for ciliogenesis. May function in ciliogenesis by mediating the transport of proteins like BBS4 to the cilium, but also through the organization of the centriolar satellites. Required for the assembly of signaling-competent cilia with proper structure and length. Mediates this function in part by regulating transition zone assembly and basal body recruitment of the IFT-B complex. Cooperates with the ciliopathy proteins CSPP1 and CEP104 during cilium length regulation. Plays two important roles during cell division. First, is required for mitotic progression via regulation of spindle assembly, organization and orientation, levels of spindle microtubules (MTs), kinetochore-fiber integrity, and chromosome alignment. Second, functions during cytokinesis in part by regulating assembly and organization of central spindle and midbody MTs. Plays a role in retina morphogenesis and/or homeostasis. The chain is Coiled-coil domain-containing protein 66 from Homo sapiens (Human).